Here is a 574-residue protein sequence, read N- to C-terminus: Urease subunit alpha (574 aa).

The Urease domain maps to 131 to 574 (GAIDSHIHFI…LPMAQRYLLL (444 aa)). Positions 136, 138, and 219 each coordinate Ni(2+). K219 is subject to N6-carboxylysine. H221 lines the substrate pocket. 2 residues coordinate Ni(2+): H248 and H274. H322 (proton donor) is an active-site residue. Residue D362 coordinates Ni(2+). The interval 384–403 (KVQRGPLPEDAANPRGSRND) is disordered.

Belongs to the metallo-dependent hydrolases superfamily. Urease alpha subunit family. Heterotrimer of UreA (gamma), UreB (beta) and UreC (alpha) subunits. Three heterotrimers associate to form the active enzyme. Ni cation serves as cofactor. In terms of processing, carboxylation allows a single lysine to coordinate two nickel ions.

It localises to the cytoplasm. The enzyme catalyses urea + 2 H2O + H(+) = hydrogencarbonate + 2 NH4(+). It participates in nitrogen metabolism; urea degradation; CO(2) and NH(3) from urea (urease route): step 1/1. The chain is Urease subunit alpha from Prochlorococcus marinus (strain MIT 9313).